A 416-amino-acid chain; its full sequence is Glutamyl-tRNA reductase (416 aa).

Substrate contacts are provided by residues 49 to 52, Ser105, 110 to 112, and Gln116; these read TCNR and EPQ. Cys50 functions as the Nucleophile in the catalytic mechanism. An NADP(+)-binding site is contributed by 185-190; the sequence is GAGETI.

This sequence belongs to the glutamyl-tRNA reductase family. As to quaternary structure, homodimer.

The catalysed reaction is (S)-4-amino-5-oxopentanoate + tRNA(Glu) + NADP(+) = L-glutamyl-tRNA(Glu) + NADPH + H(+). Its pathway is porphyrin-containing compound metabolism; protoporphyrin-IX biosynthesis; 5-aminolevulinate from L-glutamyl-tRNA(Glu): step 1/2. Catalyzes the NADPH-dependent reduction of glutamyl-tRNA(Glu) to glutamate 1-semialdehyde (GSA). The chain is Glutamyl-tRNA reductase from Shewanella oneidensis (strain ATCC 700550 / JCM 31522 / CIP 106686 / LMG 19005 / NCIMB 14063 / MR-1).